A 623-amino-acid chain; its full sequence is Trehalase (623 aa).

It belongs to the glycosyl hydrolase 15 family. As to quaternary structure, monomer.

The enzyme catalyses alpha,alpha-trehalose + H2O = alpha-D-glucose + beta-D-glucose. It functions in the pathway glycan degradation; trehalose degradation; D-glucose from alpha,alpha-trehalose: step 1/1. Its activity is regulated as follows. Inhibited by validamycin A. Catalyzes the hydrolysis of alpha,alpha-trehalose into two molecules of D-glucose. This Thermoplasma volcanium (strain ATCC 51530 / DSM 4299 / JCM 9571 / NBRC 15438 / GSS1) protein is Trehalase.